The chain runs to 243 residues: Adenosylcobinamide-GDP ribazoletransferase (243 aa).

5 helical membrane-spanning segments follow: residues L31–L51, A55–L75, I109–I129, I135–T155, and V188–W208.

This sequence belongs to the CobS family. The cofactor is Mg(2+).

Its subcellular location is the cell inner membrane. The enzyme catalyses alpha-ribazole + adenosylcob(III)inamide-GDP = adenosylcob(III)alamin + GMP + H(+). It catalyses the reaction alpha-ribazole 5'-phosphate + adenosylcob(III)inamide-GDP = adenosylcob(III)alamin 5'-phosphate + GMP + H(+). The protein operates within cofactor biosynthesis; adenosylcobalamin biosynthesis; adenosylcobalamin from cob(II)yrinate a,c-diamide: step 7/7. In terms of biological role, joins adenosylcobinamide-GDP and alpha-ribazole to generate adenosylcobalamin (Ado-cobalamin). Also synthesizes adenosylcobalamin 5'-phosphate from adenosylcobinamide-GDP and alpha-ribazole 5'-phosphate. In Pseudomonas syringae pv. tomato (strain ATCC BAA-871 / DC3000), this protein is Adenosylcobinamide-GDP ribazoletransferase.